A 231-amino-acid polypeptide reads, in one-letter code: Ribonuclease 3 (231 aa).

The RNase III domain occupies 3-130 (MHEFFENFGI…VTAAIYLDQT (128 aa)). Glutamate 43 is a binding site for Mg(2+). Aspartate 47 is a catalytic residue. The Mg(2+) site is built by aspartate 116 and glutamate 119. Glutamate 119 is an active-site residue. The 72-residue stretch at 157 to 228 (DYKSELQEII…AKDCLNKLKK (72 aa)) folds into the DRBM domain.

The protein belongs to the ribonuclease III family. Homodimer. Mg(2+) serves as cofactor.

It localises to the cytoplasm. The catalysed reaction is Endonucleolytic cleavage to 5'-phosphomonoester.. Its function is as follows. Digests double-stranded RNA. Involved in the processing of primary rRNA transcript to yield the immediate precursors to the large and small rRNAs (23S and 16S). Processes some mRNAs, and tRNAs when they are encoded in the rRNA operon. Processes pre-crRNA and tracrRNA of type II CRISPR loci if present in the organism. This is Ribonuclease 3 from Mesoplasma florum (strain ATCC 33453 / NBRC 100688 / NCTC 11704 / L1) (Acholeplasma florum).